Reading from the N-terminus, the 206-residue chain is Holliday junction branch migration complex subunit RuvA (206 aa).

The domain I stretch occupies residues 1-64; the sequence is MIGKLKGTLD…EDMLRLYGFQ (64 aa). The tract at residues 65 to 144 is domain II; that stretch reads SALEREWFRL…AYAGAASGTI (80 aa). The segment at 145 to 154 is flexible linker; the sequence is GLKQELGEGV. The domain III stretch occupies residues 154 to 206; that stretch reads VAPAPITDAVSALVNLGYSRDTAANAVAAALKTAGEDADASKLIRFGLKELAR.

This sequence belongs to the RuvA family. Homotetramer. Forms an RuvA(8)-RuvB(12)-Holliday junction (HJ) complex. HJ DNA is sandwiched between 2 RuvA tetramers; dsDNA enters through RuvA and exits via RuvB. An RuvB hexamer assembles on each DNA strand where it exits the tetramer. Each RuvB hexamer is contacted by two RuvA subunits (via domain III) on 2 adjacent RuvB subunits; this complex drives branch migration. In the full resolvosome a probable DNA-RuvA(4)-RuvB(12)-RuvC(2) complex forms which resolves the HJ.

It is found in the cytoplasm. The RuvA-RuvB-RuvC complex processes Holliday junction (HJ) DNA during genetic recombination and DNA repair, while the RuvA-RuvB complex plays an important role in the rescue of blocked DNA replication forks via replication fork reversal (RFR). RuvA specifically binds to HJ cruciform DNA, conferring on it an open structure. The RuvB hexamer acts as an ATP-dependent pump, pulling dsDNA into and through the RuvAB complex. HJ branch migration allows RuvC to scan DNA until it finds its consensus sequence, where it cleaves and resolves the cruciform DNA. In Mesorhizobium japonicum (strain LMG 29417 / CECT 9101 / MAFF 303099) (Mesorhizobium loti (strain MAFF 303099)), this protein is Holliday junction branch migration complex subunit RuvA.